A 523-amino-acid polypeptide reads, in one-letter code: Protein disulfide-isomerase (523 aa).

Residues 1 to 22 (MPGVRSLLLALAGVSLAPAVLA) form the signal peptide. The Thioredoxin 1 domain maps to 24–137 (DASTDSSDVH…TSYMIKQSLP (114 aa)). Residues cysteine 59 and cysteine 62 each act as nucleophile in the active site. An intrachain disulfide couples cysteine 59 to cysteine 62. Residue asparagine 170 is glycosylated (N-linked (GlcNAc...) asparagine). A Thioredoxin 2 domain is found at 344–475 (VIAGDIAPSV…LANFVRDNGK (132 aa)). Residues cysteine 394 and cysteine 397 are joined by a disulfide bond. Basic and acidic residues-rich tracts occupy residues 478–502 (VDAY…DAEA) and 512–523 (SEEKADKEHEEL). The tract at residues 478–523 (VDAYDEKKVEKDGSDVTGKPKDAEAPPKPSDAPESEEKADKEHEEL) is disordered. The Prevents secretion from ER signature appears at 520 to 523 (HEEL).

It belongs to the protein disulfide isomerase family.

The protein resides in the endoplasmic reticulum lumen. It catalyses the reaction Catalyzes the rearrangement of -S-S- bonds in proteins.. Its function is as follows. Participates in the folding of proteins containing disulfide bonds, may be involved in glycosylation, prolyl hydroxylation and triglyceride transfer. This chain is Protein disulfide-isomerase, found in Arthroderma benhamiae (strain ATCC MYA-4681 / CBS 112371) (Trichophyton mentagrophytes).